Reading from the N-terminus, the 195-residue chain is 2-hydroxychromene-2-carboxylate isomerase (195 aa).

Residue serine 13 is the Nucleophile of the active site. Serine 13 provides a ligand contact to glutathione. Substrate-binding positions include lysine 45 and 55–56 (NR). 181 to 184 (WGND) lines the glutathione pocket.

The protein belongs to the GST superfamily. NadH family. Glutathione is required as a cofactor.

The enzyme catalyses 2-hydroxychromene-2-carboxylate = (3E)-4-(2-hydroxyphenyl)-2-oxobut-3-enoate. Its activity is regulated as follows. Activated by salicylate. Functionally, involved in the naphthalene and naphthalenesulfonate catabolic pathway. Catalyzes the reversible glutathione-dependent isomerization of 2-hydroxychromene-2-carboxylate (HCCA) to trans-O-hydroxybenzylidenepyruvate (THBPA). It can also use 2-hydroxybenzo[g]chromene-2-carboxylate as substrate. The protein is 2-hydroxychromene-2-carboxylate isomerase (nsaD) of Sphingobium xenophagum.